The following is a 170-amino-acid chain: uncharacterized protein (170 aa).

One can recognise a Ferritin-like diiron domain in the interval 1–148 (MVKSQKVIDV…TIHDFFENAT (148 aa)).

This is an uncharacterized protein from Ureaplasma parvum serovar 3 (strain ATCC 700970).